The primary structure comprises 122 residues: MPRIIGIDIPAKKKLKISLTYIYGIGSARSDEIIKKLKLDPEARASELTEEEVGRLNSLLQSEYTVEGDLRRRVQSDIKRLIAIHSYRGQRHRLSLPVRGQRTKTNSRTRKGKRKTVAGKKK.

A disordered region spans residues arginine 93–lysine 122. Over residues glutamine 101–lysine 122 the composition is skewed to basic residues.

This sequence belongs to the universal ribosomal protein uS13 family. In terms of assembly, part of the 30S ribosomal subunit. Forms a loose heterodimer with protein S19. Forms two bridges to the 50S subunit in the 70S ribosome.

Located at the top of the head of the 30S subunit, it contacts several helices of the 16S rRNA. In the 70S ribosome it contacts the 23S rRNA (bridge B1a) and protein L5 of the 50S subunit (bridge B1b), connecting the 2 subunits; these bridges are implicated in subunit movement. Contacts the tRNAs in the A and P-sites. The sequence is that of Small ribosomal subunit protein uS13 from Chlamydia pneumoniae (Chlamydophila pneumoniae).